Consider the following 184-residue polypeptide: Crossover junction endodeoxyribonuclease RuvC (184 aa).

Active-site residues include Asp11, Glu73, and Asp147. Mg(2+)-binding residues include Asp11, Glu73, and Asp147.

Belongs to the RuvC family. As to quaternary structure, homodimer which binds Holliday junction (HJ) DNA. The HJ becomes 2-fold symmetrical on binding to RuvC with unstacked arms; it has a different conformation from HJ DNA in complex with RuvA. In the full resolvosome a probable DNA-RuvA(4)-RuvB(12)-RuvC(2) complex forms which resolves the HJ. The cofactor is Mg(2+).

It localises to the cytoplasm. It catalyses the reaction Endonucleolytic cleavage at a junction such as a reciprocal single-stranded crossover between two homologous DNA duplexes (Holliday junction).. In terms of biological role, the RuvA-RuvB-RuvC complex processes Holliday junction (HJ) DNA during genetic recombination and DNA repair. Endonuclease that resolves HJ intermediates. Cleaves cruciform DNA by making single-stranded nicks across the HJ at symmetrical positions within the homologous arms, yielding a 5'-phosphate and a 3'-hydroxyl group; requires a central core of homology in the junction. The consensus cleavage sequence is 5'-(A/T)TT(C/G)-3'. Cleavage occurs on the 3'-side of the TT dinucleotide at the point of strand exchange. HJ branch migration catalyzed by RuvA-RuvB allows RuvC to scan DNA until it finds its consensus sequence, where it cleaves and resolves the cruciform DNA. The protein is Crossover junction endodeoxyribonuclease RuvC of Neisseria gonorrhoeae (strain ATCC 700825 / FA 1090).